The following is a 303-amino-acid chain: Protoheme IX farnesyltransferase (303 aa).

9 helical membrane-spanning segments follow: residues 30 to 50 (VMSL…STVS), 54 to 74 (AMIA…LNMW), 101 to 121 (ALIF…YFAN), 123 to 143 (ISAV…TIWL), 150 to 170 (NIVI…TIAT), 178 to 198 (ITFF…LSLY), 219 to 241 (STKI…PYAI), 245 to 262 (GLVF…YNIL), and 279 to 299 (AKTI…IFLI).

The protein belongs to the UbiA prenyltransferase family. Protoheme IX farnesyltransferase subfamily.

The protein resides in the cell inner membrane. It carries out the reaction heme b + (2E,6E)-farnesyl diphosphate + H2O = Fe(II)-heme o + diphosphate. Its pathway is porphyrin-containing compound metabolism; heme O biosynthesis; heme O from protoheme: step 1/1. Its function is as follows. Converts heme B (protoheme IX) to heme O by substitution of the vinyl group on carbon 2 of heme B porphyrin ring with a hydroxyethyl farnesyl side group. The polypeptide is Protoheme IX farnesyltransferase (Pelagibacter ubique (strain HTCC1062)).